The sequence spans 99 residues: Transposase InsE for insertion sequence IS3A (99 aa).

Residues 1 to 21 form a disordered region; it reads MTKTVSTSKKPRKQHSPEFRS.

It belongs to the transposase 8 family.

Functionally, involved in the transposition of the insertion sequence IS3. The chain is Transposase InsE for insertion sequence IS3A (insE1) from Escherichia coli (strain K12).